Reading from the N-terminus, the 357-residue chain is 3-dehydroquinate synthase (357 aa).

Residues 69 to 74, 103 to 107, 127 to 128, K140, and K149 contribute to the NAD(+) site; these read DGEKNK, GVIGD, and TT. Zn(2+) contacts are provided by E182, H245, and H262.

The protein belongs to the sugar phosphate cyclases superfamily. Dehydroquinate synthase family. Requires Co(2+) as cofactor. It depends on Zn(2+) as a cofactor. NAD(+) serves as cofactor.

It is found in the cytoplasm. It catalyses the reaction 7-phospho-2-dehydro-3-deoxy-D-arabino-heptonate = 3-dehydroquinate + phosphate. It participates in metabolic intermediate biosynthesis; chorismate biosynthesis; chorismate from D-erythrose 4-phosphate and phosphoenolpyruvate: step 2/7. In terms of biological role, catalyzes the conversion of 3-deoxy-D-arabino-heptulosonate 7-phosphate (DAHP) to dehydroquinate (DHQ). The chain is 3-dehydroquinate synthase from Shewanella denitrificans (strain OS217 / ATCC BAA-1090 / DSM 15013).